The primary structure comprises 143 residues: Deoxyuridine 5'-triphosphate nucleotidohydrolase (143 aa).

Belongs to the dUTPase family. Mg(2+) is required as a cofactor.

It catalyses the reaction dUTP + H2O = dUMP + diphosphate + H(+). This enzyme is involved in nucleotide metabolism: it produces dUMP, the immediate precursor of thymidine nucleotides and it decreases the intracellular concentration of dUTP so that uracil cannot be incorporated into DNA. In Yaba monkey tumor virus (strain VR587) (YMTV), this protein is Deoxyuridine 5'-triphosphate nucleotidohydrolase (DUT).